A 315-amino-acid polypeptide reads, in one-letter code: Cobalamin biosynthesis protein CobD (315 aa).

The next 5 helical transmembrane spans lie at 48-68 (IAGFFAWLFIVFITFGVTLGI), 77-97 (PILGTVVSGILIYFCISAKGL), 150-170 (DGIIAPLFFAGIGGAPLAFLY), 200-220 (VFNYIPARLTAYLIVISSFIL), and 295-315 (MVSFLGMVVALIIRCILEVII).

Belongs to the CobD/CbiB family.

It localises to the cell membrane. The protein operates within cofactor biosynthesis; adenosylcobalamin biosynthesis. Its function is as follows. Converts cobyric acid to cobinamide by the addition of aminopropanol on the F carboxylic group. This is Cobalamin biosynthesis protein CobD from Clostridium perfringens (strain 13 / Type A).